A 1992-amino-acid polypeptide reads, in one-letter code: Fer-1-like protein 4 (1992 aa).

3 consecutive C2 domains span residues 1–97 (MALT…VLRE), 214–330 (PRGD…QKWA), and 369–502 (TSSD…AGFN). Over 1-1952 (MALTVCVRHL…PLKTFIFFIW (1952 aa)) the chain is Extracellular. Disordered regions lie at residues 554–606 (RVEP…APEI), 661–686 (AGRQ…LEVQ), and 691–710 (SEDR…PAQW). Residues 559–569 (PSQTTQRSGLS) are compositionally biased toward polar residues. Residues 572–581 (TGKKKKKKEK) show a composition bias toward basic residues. C2 domains are found at residues 951–1078 (PSSG…ELQF) and 1126–1250 (ISGH…PQEE). Disordered regions lie at residues 1245 to 1276 (EDPQ…EAGT) and 1322 to 1361 (FQGQ…SKVS). 2 stretches are compositionally biased toward acidic residues: residues 1247-1257 (PQEEEETEEET) and 1328-1337 (SDDEMDEAGD). C2 domains follow at residues 1430-1549 (SFSE…ANCG) and 1675-1824 (VPAP…EHCS). Ca(2+)-binding residues include Asp-1464, Asp-1470, Asp-1519, Asp-1521, Asp-1527, Asp-1795, Ser-1798, and Asp-1801. The tract at residues 1862–1885 (EAREAQAGKKRKRKRRAGRPEDLE) is disordered. Positions 1869 to 1878 (GKKRKRKRRA) are enriched in basic residues. A helical membrane pass occupies residues 1953–1973 (RRYWRILVLLLLALITIFLLL). The Cytoplasmic segment spans residues 1974–1992 (VFYTIPGQISEVIFSPVHK).

Ca(2+) serves as cofactor.

The protein resides in the membrane. The chain is Fer-1-like protein 4 (Fer1l4) from Mus musculus (Mouse).